Here is a 985-residue protein sequence, read N- to C-terminus: NAD kinase 2, chloroplastic (985 aa).

Residues 1-62 constitute a chloroplast transit peptide; sequence MFLCFCPCHV…KRRLRFVIRA (62 aa). The segment at 335–380 is calmodulin-binding; the sequence is APKAEQVELFASIVSDSSKRPIYVHSKEGVWRTSAMVSRWKQYMTR. Disordered regions lie at residues 389-466 and 548-615; these read SEES…PPGN and FSNG…DEAG. 2 stretches are compositionally biased toward basic and acidic residues: residues 390–399 and 413–429; these read EESKRREVSE and VPDEQTDKVSEINEVDS. A compositionally biased stretch (polar residues) spans 548-569; that stretch reads FSNGNVHASDNTNKSISDNRGN.

The protein belongs to the NAD kinase family. Expressed in leaves.

Its subcellular location is the plastid. It localises to the chloroplast. The enzyme catalyses NAD(+) + ATP = ADP + NADP(+) + H(+). Its function is as follows. Involved in chlorophyll synthesis and chloroplast protection against oxidative damage. In Arabidopsis thaliana (Mouse-ear cress), this protein is NAD kinase 2, chloroplastic (NADK2).